Reading from the N-terminus, the 137-residue chain is Large-conductance mechanosensitive channel (137 aa).

Transmembrane regions (helical) follow at residues 15–35 and 81–101; these read VDLA…TSLV and GKFI…FFVI.

This sequence belongs to the MscL family. In terms of assembly, homopentamer.

It localises to the cell inner membrane. Its function is as follows. Channel that opens in response to stretch forces in the membrane lipid bilayer. May participate in the regulation of osmotic pressure changes within the cell. The protein is Large-conductance mechanosensitive channel of Hyphomonas neptunium (strain ATCC 15444).